Reading from the N-terminus, the 286-residue chain is ATP synthase gamma chain (286 aa).

It belongs to the ATPase gamma chain family. In terms of assembly, F-type ATPases have 2 components, CF(1) - the catalytic core - and CF(0) - the membrane proton channel. CF(1) has five subunits: alpha(3), beta(3), gamma(1), delta(1), epsilon(1). CF(0) has three main subunits: a, b and c.

The protein localises to the cell membrane. In terms of biological role, produces ATP from ADP in the presence of a proton gradient across the membrane. The gamma chain is believed to be important in regulating ATPase activity and the flow of protons through the CF(0) complex. In Bacillus anthracis (strain A0248), this protein is ATP synthase gamma chain.